Reading from the N-terminus, the 299-residue chain is GTPase Era (299 aa).

One can recognise an Era-type G domain in the interval lysine 4 to glutamate 171. Residues glycine 12 to serine 19 form a G1 region. A GTP-binding site is contributed by glycine 12–serine 19. Residues glutamine 38–asparagine 42 are G2. Residues aspartate 59 to glycine 62 are G3. Residues aspartate 59–isoleucine 63 and asparagine 121–aspartate 124 each bind GTP. The G4 stretch occupies residues asparagine 121–aspartate 124. The interval isoleucine 150 to alanine 152 is G5. Residues threonine 202–lysine 280 form the KH type-2 domain.

Belongs to the TRAFAC class TrmE-Era-EngA-EngB-Septin-like GTPase superfamily. Era GTPase family. Monomer.

The protein resides in the cytoplasm. The protein localises to the cell membrane. Functionally, an essential GTPase that binds both GDP and GTP, with rapid nucleotide exchange. Plays a role in 16S rRNA processing and 30S ribosomal subunit biogenesis and possibly also in cell cycle regulation and energy metabolism. This is GTPase Era from Streptococcus uberis (strain ATCC BAA-854 / 0140J).